Consider the following 160-residue polypeptide: Deoxyuridine 5'-triphosphate nucleotidohydrolase (160 aa).

Substrate is bound by residues 76-78 (RSG), N89, and 93-95 (TID). Residues 139–149 (HTLSDTERGED) are compositionally biased toward basic and acidic residues. The segment at 139-160 (HTLSDTERGEDGFGSTGHGSHQ) is disordered. The segment covering 150 to 160 (GFGSTGHGSHQ) has biased composition (gly residues).

The protein belongs to the dUTPase family. Mg(2+) serves as cofactor.

The catalysed reaction is dUTP + H2O = dUMP + diphosphate + H(+). It functions in the pathway pyrimidine metabolism; dUMP biosynthesis; dUMP from dCTP (dUTP route): step 2/2. Its function is as follows. This enzyme is involved in nucleotide metabolism: it produces dUMP, the immediate precursor of thymidine nucleotides and it decreases the intracellular concentration of dUTP so that uracil cannot be incorporated into DNA. The protein is Deoxyuridine 5'-triphosphate nucleotidohydrolase of Beijerinckia indica subsp. indica (strain ATCC 9039 / DSM 1715 / NCIMB 8712).